Consider the following 212-residue polypeptide: ATP synthase F(0) complex subunit a (212 aa).

6 consecutive transmembrane segments (helical) span residues 3-23 (MMGI…MFTS), 58-78 (WAAM…LGLL), 87-107 (QLSM…LTGL), 128-148 (IPLL…ALGV), 154-174 (LTAG…LMPT), and 179-199 (ALST…VAMI).

This sequence belongs to the ATPase A chain family. In terms of assembly, component of the ATP synthase complex composed at least of ATP5F1A/subunit alpha, ATP5F1B/subunit beta, ATP5MC1/subunit c (homooctomer), MT-ATP6/subunit a, MT-ATP8/subunit 8, ATP5ME/subunit e, ATP5MF/subunit f, ATP5MG/subunit g, ATP5MK/subunit k, ATP5MJ/subunit j, ATP5F1C/subunit gamma, ATP5F1D/subunit delta, ATP5F1E/subunit epsilon, ATP5PF/subunit F6, ATP5PB/subunit b, ATP5PD/subunit d, ATP5PO/subunit OSCP. ATP synthase complex consists of a soluble F(1) head domain (subunits alpha(3) and beta(3)) - the catalytic core - and a membrane F(0) domain - the membrane proton channel (subunits c, a, 8, e, f, g, k and j). These two domains are linked by a central stalk (subunits gamma, delta, and epsilon) rotating inside the F1 region and a stationary peripheral stalk (subunits F6, b, d, and OSCP). Interacts with DNAJC30; interaction is direct.

The protein localises to the mitochondrion inner membrane. It carries out the reaction H(+)(in) = H(+)(out). Subunit a, of the mitochondrial membrane ATP synthase complex (F(1)F(0) ATP synthase or Complex V) that produces ATP from ADP in the presence of a proton gradient across the membrane which is generated by electron transport complexes of the respiratory chain. ATP synthase complex consist of a soluble F(1) head domain - the catalytic core - and a membrane F(1) domain - the membrane proton channel. These two domains are linked by a central stalk rotating inside the F(1) region and a stationary peripheral stalk. During catalysis, ATP synthesis in the catalytic domain of F(1) is coupled via a rotary mechanism of the central stalk subunits to proton translocation. With the subunit c (ATP5MC1), forms the proton-conducting channel in the F(0) domain, that contains two crucial half-channels (inlet and outlet) that facilitate proton movement from the mitochondrial intermembrane space (IMS) into the matrix. Protons are taken up via the inlet half-channel and released through the outlet half-channel, following a Grotthuss mechanism. The polypeptide is ATP synthase F(0) complex subunit a (Tropidurus montanus (Lizard)).